We begin with the raw amino-acid sequence, 203 residues long: MNRLFRLLPLASLVLTACSLHTPQGPGKSPDSPQWRQHQQAVRSLNQFQTRGAFAYLSDEQKVYARFFWQQTGQDRYRLLLTNPLGSTELSLTAQPGSVQLIDNKGQTYTAADAEEMIGRLTGMPIPLNSLRQWIIGLPGDATDYSLDDRYRLRELNYTQNGKTWHVTYGGYTSDTQPALPSNVELNNGAQRIKLKMDNWIVK.

Positions 1–17 (MNRLFRLLPLASLVLTA) are cleaved as a signal peptide. C18 carries the N-palmitoyl cysteine lipid modification. C18 is lipidated: S-diacylglycerol cysteine.

This sequence belongs to the LolB family. Monomer.

It is found in the cell outer membrane. In terms of biological role, plays a critical role in the incorporation of lipoproteins in the outer membrane after they are released by the LolA protein. In Klebsiella pneumoniae subsp. pneumoniae (strain ATCC 700721 / MGH 78578), this protein is Outer-membrane lipoprotein LolB.